Here is a 350-residue protein sequence, read N- to C-terminus: Dauer larva development regulatory growth factor daf-7 (350 aa).

Residues 1-21 (MFMASSLPVFIFLLSLPHGLT) form the signal peptide. A propeptide spanning residues 22–234 (FNCTNSGVCI…TRPKGSRKRR (213 aa)) is cleaved from the precursor. Residue asparagine 23 is glycosylated (N-linked (GlcNAc...) asparagine). Intrachain disulfides connect cysteine 241–cysteine 251, cysteine 250–cysteine 315, cysteine 278–cysteine 347, and cysteine 282–cysteine 349.

The protein belongs to the TGF-beta family. Expressed in the chemosensory neurons, including in the ASJ neurons in males. Expressed in the ASI neurons.

The protein resides in the secreted. Under harsh environmental conditions, larvae enter a developmentally arrested state known as dauer; TGF-beta-like daf-7 acts to inhibit dauer larva formation and promote growth. May be a ligand to cell surface receptor daf-4. May act as a negative regulator of dauer larva development by transducing chemosensory information from ASI neurons. Involved in sensitivity to CO2 levels. Involved in mate searching behavior of males, acting in concert with the neuropeptide pdf-1. In AWC neurons, acts to promote expression of srsx-3, a member of the GPCR family. This Caenorhabditis elegans protein is Dauer larva development regulatory growth factor daf-7.